Consider the following 795-residue polypeptide: Mitochondrial inner membrane m-AAA protease component paraplegin (795 aa).

A mitochondrion-targeting transit peptide spans 1-43; that stretch reads MAVLLLLLRALRRGPGPGPRPLWGPGPAWSPGFPARPGRGRPY. Residues 44 to 105 constitute a propeptide, removed in mature form; that stretch reads MASRPPGDLA…GGTFYFNTSR (62 aa). The Mitochondrial matrix segment spans residues 106-144; that stretch reads LKQKNKEKDKSKGKAPEEDEEERRRRERDDQMYRERLRT. The interval 108-133 is disordered; sequence QKNKEKDKSKGKAPEEDEEERRRRER. Over residues 109–133 the composition is skewed to basic and acidic residues; that stretch reads KNKEKDKSKGKAPEEDEEERRRRER. A helical membrane pass occupies residues 145–165; that stretch reads LLVIAVVMSLLNALSTSGGSI. At 166 to 248 the chain is on the mitochondrial intermembrane side; it reads SWNDFVHEML…DRIPVSYKRT (83 aa). Residues 249 to 269 form a helical membrane-spanning segment; sequence GFFGNALYSVGMTAVGLAILW. The Mitochondrial matrix segment spans residues 270 to 795; that stretch reads YVFRLAGMTG…LGGEEPTWPK (526 aa). ATP-binding residues include Ala312, Gly352, Cys353, Gly354, Lys355, Thr356, and Leu357. Tyr505 is subject to 3'-nitrotyrosine. His574 is a binding site for Zn(2+). Glu575 is a catalytic residue. Zn(2+) contacts are provided by His578 and Asp650. An interaction with PPIF region spans residues 701–795; sequence HEARLLVAKA…LGGEEPTWPK (95 aa). Positions 751–795 are disordered; it reads PHGPKKMIAPQRWIDAQREKQDLGEEETEETQQPPLGGEEPTWPK.

It in the N-terminal section; belongs to the AAA ATPase family. This sequence in the C-terminal section; belongs to the peptidase M41 family. In terms of assembly, forms heterooligomers with AFG3L2; the m-AAA protease is composed of heterohexamers of AFG3L2 and SPG7. Component of the mitochondrial permeability transition pore complex (mPTPC), at least composed of SPG7, VDAC1 and PPIF. Interacts with MAIP1. Zn(2+) is required as a cofactor. In terms of processing, upon import into the mitochondrion, the N-terminal transit peptide is cleaved by the mitochondrial-processing peptidase (MPP) to generate an intermediate form which undergoes a second proteolytic cleavage mediated by proteases AFG3L2 removing an additional N-terminal fragment to generate the proteolytically active mature form. As to expression, ubiquitous.

The protein resides in the mitochondrion inner membrane. It catalyses the reaction ATP + H2O = ADP + phosphate + H(+). Its function is as follows. Catalytic component of the m-AAA protease, a protease that plays a key role in proteostasis of inner mitochondrial membrane proteins, and which is essential for axonal and neuron development. SPG7 possesses both ATPase and protease activities: the ATPase activity is required to unfold substrates, threading them into the internal proteolytic cavity for hydrolysis into small peptide fragments. The m-AAA protease exerts a dual role in the mitochondrial inner membrane: it mediates the processing of specific regulatory proteins and ensures protein quality control by degrading misfolded polypeptides. Mediates protein maturation of the mitochondrial ribosomal subunit MRPL32/bL32m by catalyzing the cleavage of the presequence of MRPL32/bL32m prior to assembly into the mitochondrial ribosome. Acts as a regulator of calcium in neurons by mediating degradation of SMDT1/EMRE before its assembly with the uniporter complex, limiting the availability of SMDT1/EMRE for MCU assembly and promoting efficient assembly of gatekeeper subunits with MCU. Also regulates mitochondrial calcium by catalyzing degradation of MCU. Plays a role in the formation and regulation of the mitochondrial permeability transition pore (mPTP) and its proteolytic activity is dispensable for this function. The protein is Mitochondrial inner membrane m-AAA protease component paraplegin of Homo sapiens (Human).